The chain runs to 200 residues: Diadenylate cyclase (200 aa).

The helical transmembrane segment at 5–25 threads the bilayer; that stretch reads ILLFITLIFLLLLFVFLIAFA. The region spanning 28 to 185 is the DAC domain; it reads NKRVRNYVVR…KGVIKTLSSN (158 aa).

It belongs to the adenylate cyclase family. DacB/CdaS subfamily. As to quaternary structure, probably oligomerizes.

It is found in the cell membrane. The catalysed reaction is 2 ATP = 3',3'-c-di-AMP + 2 diphosphate. In terms of biological role, catalyzes the condensation of 2 ATP molecules into cyclic di-AMP (c-di-AMP), a second messenger used to regulate differing processes in different bacteria. This Mycoplasma genitalium (strain ATCC 33530 / DSM 19775 / NCTC 10195 / G37) (Mycoplasmoides genitalium) protein is Diadenylate cyclase.